The following is a 908-amino-acid chain: DNA mismatch repair protein MutS (908 aa).

Position 662 to 669 (662 to 669) interacts with ATP; that stretch reads GPNMGGKS.

This sequence belongs to the DNA mismatch repair MutS family.

Its function is as follows. This protein is involved in the repair of mismatches in DNA. It is possible that it carries out the mismatch recognition step. This protein has a weak ATPase activity. This Rhizobium etli (strain ATCC 51251 / DSM 11541 / JCM 21823 / NBRC 15573 / CFN 42) protein is DNA mismatch repair protein MutS.